The sequence spans 385 residues: Deoxyguanosinetriphosphate triphosphohydrolase-like protein (385 aa).

Positions 1-14 (MTEGVEGRSQERSD) are enriched in basic and acidic residues. Residues 1–23 (MTEGVEGRSQERSDLAGFAARSA) are disordered. The HD domain occupies 75 to 204 (RLTHSLEVAQ…INYADEIAYN (130 aa)).

The protein belongs to the dGTPase family. Type 2 subfamily.

This Geobacter metallireducens (strain ATCC 53774 / DSM 7210 / GS-15) protein is Deoxyguanosinetriphosphate triphosphohydrolase-like protein.